Reading from the N-terminus, the 320-residue chain is N-acetylneuraminate lyase (320 aa).

Residues Thr51 and Thr52 each coordinate aceneuramate. Catalysis depends on Tyr143, which acts as the Proton donor. Lys173 serves as the catalytic Schiff-base intermediate with substrate. 5 residues coordinate aceneuramate: Thr175, Gly199, Asp201, Glu202, and Ser218. At Ser308 the chain carries Phosphoserine.

The protein belongs to the DapA family. NanA subfamily. In terms of assembly, homotetramer.

The protein resides in the cytoplasm. It catalyses the reaction aceneuramate = aldehydo-N-acetyl-D-mannosamine + pyruvate. The protein operates within amino-sugar metabolism; N-acetylneuraminate degradation. Functionally, catalyzes the cleavage of N-acetylneuraminic acid (sialic acid) to form pyruvate and N-acetylmannosamine via a Schiff base intermediate. It prevents sialic acids from being recycled and returning to the cell surface. Involved in the N-glycolylneuraminic acid (Neu5Gc) degradation pathway. In Mus musculus (Mouse), this protein is N-acetylneuraminate lyase.